A 524-amino-acid polypeptide reads, in one-letter code: Light-independent protochlorophyllide reductase subunit B (524 aa).

Asp-36 serves as a coordination point for [4Fe-4S] cluster. Residue Asp-290 is the Proton donor of the active site. 425-426 (GL) serves as a coordination point for substrate.

Belongs to the ChlB/BchB/BchZ family. Protochlorophyllide reductase is composed of three subunits; ChlL, ChlN and ChlB. Forms a heterotetramer of two ChlB and two ChlN subunits. [4Fe-4S] cluster is required as a cofactor.

The catalysed reaction is chlorophyllide a + oxidized 2[4Fe-4S]-[ferredoxin] + 2 ADP + 2 phosphate = protochlorophyllide a + reduced 2[4Fe-4S]-[ferredoxin] + 2 ATP + 2 H2O. The protein operates within porphyrin-containing compound metabolism; chlorophyll biosynthesis (light-independent). Functionally, component of the dark-operative protochlorophyllide reductase (DPOR) that uses Mg-ATP and reduced ferredoxin to reduce ring D of protochlorophyllide (Pchlide) to form chlorophyllide a (Chlide). This reaction is light-independent. The NB-protein (ChlN-ChlB) is the catalytic component of the complex. In Synechococcus sp. (strain CC9605), this protein is Light-independent protochlorophyllide reductase subunit B.